The following is a 692-amino-acid chain: Elongation factor G (692 aa).

In terms of domain architecture, tr-type G spans 8–282 (ENTRNIGIMA…AVIDYLPSPL (275 aa)). Residues 17–24 (AHIDAGKT), 81–85 (DTPGH), and 135–138 (NKMD) contribute to the GTP site.

Belongs to the TRAFAC class translation factor GTPase superfamily. Classic translation factor GTPase family. EF-G/EF-2 subfamily.

It localises to the cytoplasm. Its function is as follows. Catalyzes the GTP-dependent ribosomal translocation step during translation elongation. During this step, the ribosome changes from the pre-translocational (PRE) to the post-translocational (POST) state as the newly formed A-site-bound peptidyl-tRNA and P-site-bound deacylated tRNA move to the P and E sites, respectively. Catalyzes the coordinated movement of the two tRNA molecules, the mRNA and conformational changes in the ribosome. The chain is Elongation factor G from Bacillus cytotoxicus (strain DSM 22905 / CIP 110041 / 391-98 / NVH 391-98).